The following is an 865-amino-acid chain: Envelope glycoprotein gp160 (865 aa).

Positions 1-31 (MRVMEMRKNCQHLWKWGTMLLGMLMICSAAE) are cleaved as a signal peptide. The Extracellular segment spans residues 32–693 (DLWVTVYYGV…ITQWLWYIRI (662 aa)). A disulfide bridge connects residues cysteine 53 and cysteine 73. N-linked (GlcNAc...) asparagine; by host glycans are attached at residues asparagine 87, asparagine 129, asparagine 136, asparagine 139, asparagine 156, asparagine 193, asparagine 194, asparagine 197, asparagine 198, asparagine 203, asparagine 210, asparagine 247, asparagine 254, asparagine 275, asparagine 289, asparagine 302, asparagine 308, asparagine 314, asparagine 344, asparagine 351, and asparagine 367. Disulfide bonds link cysteine 118–cysteine 218, cysteine 125–cysteine 209, cysteine 130–cysteine 157, cysteine 231–cysteine 260, and cysteine 241–cysteine 252. A V1 region spans residues 130–156 (CTDANLNGTNVTSSSGGTMMENGEIKN). Residues 157–209 (CSFQVTTSRRDKTQKKYALFYKLDVVPIEKGNISPKNNTSNNTSYGNYTLIHC) are V2. Residues 309 to 342 (CTRPNNNTRKSITKGPGRVIYATGQIIGDIRKAH) are V3. Cysteine 309 and cysteine 343 form a disulfide bridge. A CD4-binding loop region spans residues 375 to 385 (SSGGDPEIVLH). 2 disulfides stabilise this stretch: cysteine 389/cysteine 452 and cysteine 396/cysteine 425. A V4 region spans residues 396–425 (CNTTQLFNSTWNSTEGSNNTGGNDTITLPC). Asparagine 397, asparagine 403, asparagine 407, asparagine 413, asparagine 418, asparagine 455, and asparagine 471 each carry an N-linked (GlcNAc...) asparagine; by host glycan. 2 V5 regions span residues 468–479 (DTTNTTEIFRLG) and 470–479 (TNTTEIFRLG). The interval 520–541 (AVGTIGAMFLGFLGAAGSTMGA) is fusion peptide. The segment at 583 to 601 (KQLQARVLAVERYLRDQQL) is immunosuppression. Cysteines 607 and 613 form a disulfide. 4 N-linked (GlcNAc...) asparagine; by host glycosylation sites follow: asparagine 620, asparagine 625, asparagine 634, and asparagine 646. The stretch at 642-676 (REIDNYTGIIYNLLEESQNQQEKNEQELLELDKWA) forms a coiled coil. An MPER; binding to GalCer region spans residues 671–692 (ELDKWANLWNWFDITQWLWYIR). A helical membrane pass occupies residues 694–714 (FIMIVGGLVGLKIVFAVLSIV). Topologically, residues 715 to 865 (NRVRQGYSPL…IRQGLERALL (151 aa)) are cytoplasmic. A YXXL motif; contains endocytosis signal motif is present at residues 721 to 724 (YSPL). Positions 728 to 754 (THLPAPRGPDRPEGIEGEGGERDRDRS) are disordered. Over residues 735 to 754 (GPDRPEGIEGEGGERDRDRS) the composition is skewed to basic and acidic residues. Residue cysteine 773 is the site of S-palmitoyl cysteine; by host attachment. The Di-leucine internalization motif signature appears at 864–865 (LL).

It belongs to the HIV-1 env protein family. In terms of assembly, the mature envelope protein (Env) consists of a homotrimer of non-covalently associated gp120-gp41 heterodimers. The resulting complex protrudes from the virus surface as a spike. There seems to be as few as 10 spikes on the average virion. Interacts with host CD4, CCR5 and CXCR4. Gp120 also interacts with the C-type lectins CD209/DC-SIGN and CLEC4M/DC-SIGNR (collectively referred to as DC-SIGN(R)). Gp120 and gp41 interact with GalCer. Gp120 interacts with host ITGA4/ITGB7 complex; on CD4+ T-cells, this interaction results in rapid activation of integrin ITGAL/LFA-1, which facilitates efficient cell-to-cell spreading of HIV-1. Gp120 interacts with cell-associated heparan sulfate; this interaction increases virus infectivity on permissive cells and may be involved in infection of CD4- cells. As to quaternary structure, the mature envelope protein (Env) consists of a homotrimer of non-covalently associated gp120-gp41 heterodimers. The resulting complex protrudes from the virus surface as a spike. There seems to be as few as 10 spikes on the average virion. Post-translationally, highly glycosylated by host. The high number of glycan on the protein is reffered to as 'glycan shield' because it contributes to hide protein sequence from adaptive immune system. In terms of processing, palmitoylation of the transmembrane protein and of Env polyprotein (prior to its proteolytic cleavage) is essential for their association with host cell membrane lipid rafts. Palmitoylation is therefore required for envelope trafficking to classical lipid rafts, but not for viral replication. Specific enzymatic cleavages in vivo yield mature proteins. Envelope glycoproteins are synthesized as an inactive precursor that is heavily N-glycosylated and processed likely by host cell furin in the Golgi to yield the mature SU and TM proteins. The cleavage site between SU and TM requires the minimal sequence [KR]-X-[KR]-R. About 2 of the 9 disulfide bonds of gp41 are reduced by P4HB/PDI, following binding to CD4 receptor.

It is found in the virion membrane. The protein localises to the host cell membrane. It localises to the host endosome membrane. Oligomerizes in the host endoplasmic reticulum into predominantly trimers. In a second time, gp160 transits in the host Golgi, where glycosylation is completed. The precursor is then proteolytically cleaved in the trans-Golgi and thereby activated by cellular furin or furin-like proteases to produce gp120 and gp41. Its function is as follows. Attaches the virus to the host lymphoid cell by binding to the primary receptor CD4. This interaction induces a structural rearrangement creating a high affinity binding site for a chemokine coreceptor like CXCR4 and/or CCR5. Acts as a ligand for CD209/DC-SIGN and CLEC4M/DC-SIGNR, which are respectively found on dendritic cells (DCs), and on endothelial cells of liver sinusoids and lymph node sinuses. These interactions allow capture of viral particles at mucosal surfaces by these cells and subsequent transmission to permissive cells. HIV subverts the migration properties of dendritic cells to gain access to CD4+ T-cells in lymph nodes. Virus transmission to permissive T-cells occurs either in trans (without DCs infection, through viral capture and transmission), or in cis (following DCs productive infection, through the usual CD4-gp120 interaction), thereby inducing a robust infection. In trans infection, bound virions remain infectious over days and it is proposed that they are not degraded, but protected in non-lysosomal acidic organelles within the DCs close to the cell membrane thus contributing to the viral infectious potential during DCs' migration from the periphery to the lymphoid tissues. On arrival at lymphoid tissues, intact virions recycle back to DCs' cell surface allowing virus transmission to CD4+ T-cells. Functionally, acts as a class I viral fusion protein. Under the current model, the protein has at least 3 conformational states: pre-fusion native state, pre-hairpin intermediate state, and post-fusion hairpin state. During fusion of viral and target intracellular membranes, the coiled coil regions (heptad repeats) assume a trimer-of-hairpins structure, positioning the fusion peptide in close proximity to the C-terminal region of the ectodomain. The formation of this structure appears to drive apposition and subsequent fusion of viral and target cell membranes. Complete fusion occurs in host cell endosomes and is dynamin-dependent, however some lipid transfer might occur at the plasma membrane. The virus undergoes clathrin-dependent internalization long before endosomal fusion, thus minimizing the surface exposure of conserved viral epitopes during fusion and reducing the efficacy of inhibitors targeting these epitopes. Membranes fusion leads to delivery of the nucleocapsid into the cytoplasm. The chain is Envelope glycoprotein gp160 from Homo sapiens (Human).